A 382-amino-acid chain; its full sequence is MSNATNNTLGSLLPQLEAAANSNSLYGGMVPNLRFNITMIVIWGILLTIHVVQLLMRQYWFSIAFICTGILEVLGFIGRTWSHSNVADMDAFLLNMICLTIAPVFTMGGIYYQLAKLIEVYGHRFSLLPSPMAYSFIFICSDIVSLVVQAVGGGLCGVAVTDGTSTTTGNHVFIAGLAIQVASMAIFLMLWFHFLFRIYISVRWEHINSRPISLSLLKISQTEVDYLYREKFHFLRLEPKRWVFHYFNLAITVAVLTIFTRCCYRLAELVVGWDGYLITHEWYFIILDALMMAIATVTLTIFHPGFAFKGKSTSIPITPGHVDPETLPHTDDVEDILDTSDSKQFDIEKEEFQASMKYPISTFKQFMSKIANLFSSKKKAKL.

Topologically, residues 1–34 are extracellular; it reads MSNATNNTLGSLLPQLEAAANSNSLYGGMVPNLR. N-linked (GlcNAc...) asparagine glycosylation is found at Asn3 and Asn6. Residues 35–55 traverse the membrane as a helical segment; the sequence is FNITMIVIWGILLTIHVVQLL. Over 56 to 57 the chain is Cytoplasmic; that stretch reads MR. Residues 58–78 form a helical membrane-spanning segment; that stretch reads QYWFSIAFICTGILEVLGFIG. Over 79-90 the chain is Extracellular; the sequence is RTWSHSNVADMD. Residues 91–111 form a helical membrane-spanning segment; that stretch reads AFLLNMICLTIAPVFTMGGIY. Residues 112–135 lie on the Cytoplasmic side of the membrane; the sequence is YQLAKLIEVYGHRFSLLPSPMAYS. The helical transmembrane segment at 136-156 threads the bilayer; sequence FIFICSDIVSLVVQAVGGGLC. Over 157–171 the chain is Extracellular; sequence GVAVTDGTSTTTGNH. Residues 172-192 form a helical membrane-spanning segment; it reads VFIAGLAIQVASMAIFLMLWF. The Cytoplasmic segment spans residues 193-241; sequence HFLFRIYISVRWEHINSRPISLSLLKISQTEVDYLYREKFHFLRLEPKR. The chain crosses the membrane as a helical span at residues 242 to 262; sequence WVFHYFNLAITVAVLTIFTRC. Residues 263 to 281 lie on the Extracellular side of the membrane; the sequence is CYRLAELVVGWDGYLITHE. A helical membrane pass occupies residues 282–302; sequence WYFIILDALMMAIATVTLTIF. The Cytoplasmic segment spans residues 303–382; it reads HPGFAFKGKS…LFSSKKKAKL (80 aa).

Belongs to the lipid-translocating exporter (LTE) (TC 9.A.26.1) family.

Its subcellular location is the cell membrane. Functionally, catalyzes the ATP-dependent translocation of sphingoid long-chain bases (LCBs) from the cytoplasmic site toward the extracytoplasmic side of the membrane (flip-flop). Involved in the establishment of the functional lipid asymmetry of the plasma membrane. Regulates intracellular levels of LCBs, sphingolipid precursors that are growth inhibitory at increased levels. This chain is Sphingoid long-chain base transporter RSB1 (RSB1), found in Saccharomyces cerevisiae (strain JAY291) (Baker's yeast).